Consider the following 462-residue polypeptide: tRNA(Ile2) 2-agmatinylcytidine synthetase TiaS (462 aa).

It belongs to the TiaS family.

The protein resides in the cytoplasm. It carries out the reaction cytidine(34) in tRNA(Ile2) + agmatine + ATP + H2O = 2-agmatinylcytidine(34) in tRNA(Ile2) + AMP + 2 phosphate + 2 H(+). In terms of biological role, ATP-dependent agmatine transferase that catalyzes the formation of 2-agmatinylcytidine (agm2C) at the wobble position (C34) of tRNA(Ile2), converting the codon specificity from AUG to AUA. The polypeptide is tRNA(Ile2) 2-agmatinylcytidine synthetase TiaS (Haloquadratum walsbyi (strain DSM 16790 / HBSQ001)).